The sequence spans 222 residues: Probable GTP-binding protein EngB (222 aa).

An EngB-type G domain is found at 27–202; the sequence is TGIEVAFAGR…AKKLDEWFLG (176 aa). Residues 35-42, 61-65, 81-84, 148-151, and 181-183 each bind GTP; these read GRSNAGKS, GRTQL, DLPG, TKAD, and FSS. Positions 42 and 63 each coordinate Mg(2+).

The protein belongs to the TRAFAC class TrmE-Era-EngA-EngB-Septin-like GTPase superfamily. EngB GTPase family. Mg(2+) is required as a cofactor.

Functionally, necessary for normal cell division and for the maintenance of normal septation. This is Probable GTP-binding protein EngB from Pseudoalteromonas translucida (strain TAC 125).